A 110-amino-acid polypeptide reads, in one-letter code: ATP-dependent Clp protease adapter protein ClpS (110 aa).

Residues 1–10 show a composition bias toward basic and acidic residues; that stretch reads MSDDRRRGDE. The tract at residues 1-27 is disordered; it reads MSDDRRRGDEDGGAGTGVITKTKPKTK.

It belongs to the ClpS family. As to quaternary structure, binds to the N-terminal domain of the chaperone ClpA.

Involved in the modulation of the specificity of the ClpAP-mediated ATP-dependent protein degradation. The sequence is that of ATP-dependent Clp protease adapter protein ClpS from Parvibaculum lavamentivorans (strain DS-1 / DSM 13023 / NCIMB 13966).